A 351-amino-acid chain; its full sequence is Anaerobic nitrite reductase Glb1-2 (351 aa).

2 Globin domains span residues Asp13–Lys162 and Cys184–Lys333. 12 residues coordinate heme b: Ser56, Lys70, His74, Lys104, Thr108, His109, Ser227, Lys241, His245, Lys275, Thr279, and His280. The segment at Glu331–Ser351 is disordered.

It belongs to the plant globin family. Monomer. Heme b is required as a cofactor. In terms of tissue distribution, predominantly expressed in nodules and roots, and, to a lesser extent, in leaves, at low levels in pods, but barely in stems, petioles, buds and flowers. Mainly expressed in nodules and roots at low levels, and barely in leaves. As to expression, expressed at very low levels in nodules, roots and pods.

It is found in the cytoplasm. The protein localises to the nucleus. The catalysed reaction is Fe(III)-heme b-[protein] + nitric oxide + H2O = Fe(II)-heme b-[protein] + nitrite + 2 H(+). Phytoglobin that regulates the fine tuning of nitric oxide (NO) concentration in the cytosol in response to sudden changes in O(2) availability, and performs both symbiotic and nonsymbiotic functions. Exhibits NO dioxygenase activity in the presence of O(2) but nitrite reductase (NiR) activity in the absence of O(2) (e.g. during flooding or in waterlogged soil). May not function as an oxygen storage or transport protein. Extremely reactive toward the physiological ligands O(2), nitric oxide (NO), and nitrite with a very high affinity for O(2) through an hexacoordinate heme iron because of a very low dissociation constant. In terms of biological role, very high affinity for O(2) through two hexacoordinate heme irons. Extremely reactive toward the physiological ligands O(2), nitric oxide (NO), and nitrite. Its function is as follows. Very high affinity for O(2) through a single hexacoordinate heme iron. Extremely reactive toward the physiological ligands O(2), nitric oxide (NO), and nitrite. The polypeptide is Anaerobic nitrite reductase Glb1-2 (Medicago truncatula (Barrel medic)).